Consider the following 224-residue polypeptide: Polysialic acid transport ATP-binding protein KpsT (224 aa).

Positions 2 to 223 (IKIENLTKSY…EYKMYQDLDI (222 aa)) constitute an ABC transporter domain. ATP is bound at residue 38 to 45 (GRNGAGKS).

Belongs to the ABC transporter superfamily.

Its subcellular location is the cell inner membrane. Putative ATP-binding protein, and an energy coupling component for the transport of polysialic acid across the cytoplasmic membrane. This is Polysialic acid transport ATP-binding protein KpsT (kpsT) from Escherichia coli.